We begin with the raw amino-acid sequence, 338 residues long: Galaxin (338 aa).

The signal sequence occupies residues 1 to 23; the sequence is MKPSGAFLSLCVVLLSLATHCFS. Over residues 30 to 47 the composition is skewed to basic and acidic residues; that stretch reads RRDAHSDTNALKSRDRRQ. Residues 30–50 form a disordered region; sequence RRDAHSDTNALKSRDRRQAPA.

In terms of tissue distribution, component of the acid-insoluble organic matrix of the aragonitic skeleton (at protein level). Initially, expressed in an aboral submarginal ring and then along calcifying septa.

The protein localises to the secreted. This chain is Galaxin, found in Acropora millepora (Staghorn coral).